We begin with the raw amino-acid sequence, 305 residues long: Ribosomal RNA small subunit methyltransferase H (305 aa).

S-adenosyl-L-methionine contacts are provided by residues 30-32 (GGH), aspartate 49, phenylalanine 74, aspartate 96, and glutamine 103.

The protein belongs to the methyltransferase superfamily. RsmH family.

Its subcellular location is the cytoplasm. It catalyses the reaction cytidine(1402) in 16S rRNA + S-adenosyl-L-methionine = N(4)-methylcytidine(1402) in 16S rRNA + S-adenosyl-L-homocysteine + H(+). Functionally, specifically methylates the N4 position of cytidine in position 1402 (C1402) of 16S rRNA. The polypeptide is Ribosomal RNA small subunit methyltransferase H (Francisella tularensis subsp. holarctica (strain LVS)).